Reading from the N-terminus, the 323-residue chain is MKQYLELVAHVIKHGTLQANRTGVNTISFPGAMLRYDLQEGFPAITTRRMAFKSAIGEMVGFLRGVSNAAEFRELGCKVWDQNANENAQWLNNPFRKGEDDLGEIYGVQWRKWPAYKRIDTGNVAAIELALGQGYRQIAESEEDGQSFVVLYKAIDQIRQCIDTIINDPGSRRILFHGWNCAQLDEMALPPCHLLYQLHPNPQTREISLTLYIRSNDLGLGTPFNLTEGAALLSLIGRLTGYTPRWFTYFIGDAHVYENHLDMLNEQMTREPYPMPKLVISDRVPEFAKTGVYQPEWLELIEPSDFSLEGYQHHPAMTAPMAV.

Residues arginine 21 and 172-173 (RR) contribute to the dUMP site. Cysteine 192 (nucleophile) is an active-site residue. DUMP-binding positions include 214 to 217 (RSND), asparagine 225, and 255 to 257 (HVY). Aspartate 217 is a binding site for (6R)-5,10-methylene-5,6,7,8-tetrahydrofolate. Position 322 (alanine 322) interacts with (6R)-5,10-methylene-5,6,7,8-tetrahydrofolate.

It belongs to the thymidylate synthase family. Bacterial-type ThyA subfamily. Homodimer.

It is found in the cytoplasm. It carries out the reaction dUMP + (6R)-5,10-methylene-5,6,7,8-tetrahydrofolate = 7,8-dihydrofolate + dTMP. It functions in the pathway pyrimidine metabolism; dTTP biosynthesis. Functionally, catalyzes the reductive methylation of 2'-deoxyuridine-5'-monophosphate (dUMP) to 2'-deoxythymidine-5'-monophosphate (dTMP) while utilizing 5,10-methylenetetrahydrofolate (mTHF) as the methyl donor and reductant in the reaction, yielding dihydrofolate (DHF) as a by-product. This enzymatic reaction provides an intracellular de novo source of dTMP, an essential precursor for DNA biosynthesis. This is Thymidylate synthase from Pseudomonas syringae pv. tomato (strain ATCC BAA-871 / DC3000).